Consider the following 633-residue polypeptide: Transcriptional repressor p66-alpha (633 aa).

The span at 1–18 shows a compositional bias: basic and acidic residues; it reads MTEEACRTRSQKRALERD. Disordered regions lie at residues 1-59 and 73-119; these read MTEE…PTQG and RGEG…RVNG. Residues threonine 20 and threonine 49 each carry the phosphothreonine modification. Residues 86 to 99 are compositionally biased toward basic and acidic residues; sequence RTSHSDMKSERRPP. A Glycyl lysine isopeptide (Lys-Gly) (interchain with G-Cter in SUMO2) cross-link involves residue lysine 93. Phosphoserine is present on residues serine 100, serine 107, serine 113, serine 114, and serine 137. Residues 108-119 show a composition bias toward polar residues; it reads DNEQPSSPRVNG. The stretch at 139-174 forms a coiled coil; sequence EERERMIKQLKEELRLEEAKLVLLKKLRQSQIQKEA. The segment at 144–178 is CR1; interaction with HDAC1, HDAC2, MBD2 and MTA2; that stretch reads MIKQLKEELRLEEAKLVLLKKLRQSQIQKEATAQK. Positions 172–188 are enriched in polar residues; the sequence is KEATAQKPTGSVGSTVT. A disordered region spans residues 172–238; sequence KEATAQKPTG…QASSKLGPQA (67 aa). Lysine 178 is covalently cross-linked (Glycyl lysine isopeptide (Lys-Gly) (interchain with G-Cter in SUMO2)). Positions 181–295 are interaction with ZMYND8; sequence GSVGSTVTTP…IIQQGLIRVA (115 aa). Position 189 is a phosphothreonine (threonine 189). The span at 196–212 shows a compositional bias: polar residues; sequence GTQNIPAGKPSLQTSSA. Residue lysine 204 forms a Glycyl lysine isopeptide (Lys-Gly) (interchain with G-Cter in SUMO2) linkage. Arginine 225 carries the omega-N-methylarginine modification. Polar residues predominate over residues 228–238; it reads QQASSKLGPQA. Lysine 233 is covalently cross-linked (Glycyl lysine isopeptide (Lys-Gly) (interchain with G-Cter in SUMO2)). Omega-N-methylarginine occurs at positions 249, 258, and 273. Serine 275 carries the phosphoserine modification. Arginine 285 bears the Omega-N-methylarginine mark. Serine 340 and serine 343 each carry phosphoserine. Residues 340–480 form a CR2; histone tail-binding and interaction with CHD4 and CDK2AP1 region; it reads SPASRQAAAK…EIEQRLLQQG (141 aa). The segment at 411–464 adopts a GATA-type zinc-finger fold; the sequence is SREPYMCAQCKTDFTCRWREEKSGAIMCENCMTTNQKKALKVEHTSRLKAAFVK. Residues lysine 464 and lysine 487 each participate in a glycyl lysine isopeptide (Lys-Gly) (interchain with G-Cter in SUMO2) cross-link. Serine 512 is subject to Phosphoserine. Arginine 539 is subject to Asymmetric dimethylarginine; alternate. Omega-N-methylarginine; alternate is present on arginine 539. Phosphoserine is present on residues serine 546 and serine 548. A Glycyl lysine isopeptide (Lys-Gly) (interchain with G-Cter in SUMO2) cross-link involves residue lysine 550. Serine 556 carries the post-translational modification Phosphoserine. Positions 561-585 are disordered; sequence VSRTGRHSERTVSAGKGSATSNWKK. Lysine 585 participates in a covalent cross-link: Glycyl lysine isopeptide (Lys-Gly) (interchain with G-Cter in SUMO2). Position 598 is a phosphoserine (serine 598). Lysine 605 is covalently cross-linked (Glycyl lysine isopeptide (Lys-Gly) (interchain with G-Cter in SUMO2)).

As to quaternary structure, homooligomer. Component of the nucleosome remodeling and deacetylase (NuRD) repressor complex, composed of core proteins MTA1, MTA2, MTA3, RBBP4, RBBP7, HDAC1, HDAC2, MBD2, MBD3, and peripherally associated proteins CDK2AP1, CDK2AP2, GATAD2A, GATAD2B, CHD3, CHD4 and CHD5. The exact stoichiometry of the NuRD complex is unknown, and some subunits such as MBD2 and MBD3, GATAD2A and GATAD2B, and CHD3, CHD4 and CHD5 define mutually exclusive NuRD complexes. Component of the MeCP1 histone deacetylase complex. Interacts with CDK2AP1. Interacts with CHD4. Interacts with ERCC6. Interacts with HDAC1. Interacts with HDAC2. Interacts with MBD2; this interaction is required for the enhancement of MBD2-mediated repression and for targeting to the chromatin. Interacts with MBD3. Interacts with MTA2. Interacts with ZMYND8. Interacts with histone tails, including that of histones H2A, H2B, H3 and H4, the interaction is reduced by histone acetylation. In terms of tissue distribution, ubiquitous, both in fetal and adult tissues.

Its subcellular location is the nucleus speckle. The protein resides in the nucleus. It localises to the chromosome. Its function is as follows. Transcriptional repressor. Acts as a component of the histone deacetylase NuRD complex which participates in the remodeling of chromatin. Enhances MBD2-mediated repression. Efficient repression requires the presence of GATAD2B. The polypeptide is Transcriptional repressor p66-alpha (GATAD2A) (Homo sapiens (Human)).